The chain runs to 215 residues: Ras-related protein Rab-5B (215 aa).

At Thr-2 the chain carries N-acetylthreonine. 10 residues coordinate GTP: Ser-29, Ala-30, Gly-32, Lys-33, Ser-34, Ser-35, His-46, Glu-47, Thr-52, and Gly-78. Ser-34 lines the Mg(2+) pocket. 2 consecutive short sequence motifs (switch) follow at residues 44-56 (QFHE…IGAA) and 77-93 (AGQE…YRGA). Thr-52 serves as a coordination point for Mg(2+). Residue Ser-84 is modified to Phosphoserine; by LRRK2. Residues Asn-133, Lys-134, Asp-136, Ala-164, and Lys-165 each contribute to the GTP site. Residues 186 to 215 (PQNLGGAAGRSRGVDLHEQSQQNKSQCCSN) form a disordered region. Residues 204–215 (QSQQNKSQCCSN) show a composition bias toward low complexity. 2 S-geranylgeranyl cysteine lipidation sites follow: Cys-212 and Cys-213.

Belongs to the small GTPase superfamily. Rab family. In terms of assembly, binds EEA1. Interacts with RIN2 and RIN3, which probably regulate its pathway, possibly by acting as GEFs. Interacts with GDI1, GDI2, CHML and CHM; phosphorylation at Ser-84 disrupts this interaction. Mg(2+) serves as cofactor. In terms of processing, phosphorylation of Ser-84 in the switch II region by LRRK2 prevents the association of RAB regulatory proteins, including CHM, CHML and RAB GDP dissociation inhibitors GDI1 and GDI2. (Microbial infection) Glycosylated on arginine residues by S.typhimurium protein Ssek3.

It is found in the cell membrane. The protein resides in the early endosome membrane. It localises to the melanosome. The catalysed reaction is GTP + H2O = GDP + phosphate + H(+). With respect to regulation, regulated by guanine nucleotide exchange factors (GEFs) which promote the exchange of bound GDP for free GTP. Regulated by GTPase activating proteins (GAPs) which increase the GTP hydrolysis activity. Inhibited by GDP dissociation inhibitors (GDIs). Its function is as follows. The small GTPases Rab are key regulators of intracellular membrane trafficking, from the formation of transport vesicles to their fusion with membranes. Rabs cycle between an inactive GDP-bound form and an active GTP-bound form that is able to recruit to membranes different sets of downstream effectors directly responsible for vesicle formation, movement, tethering and fusion. The sequence is that of Ras-related protein Rab-5B from Homo sapiens (Human).